We begin with the raw amino-acid sequence, 317 residues long: L-lactate dehydrogenase (317 aa).

Residues Val-18, Asp-39, Lys-44, Tyr-69, and 83 to 84 contribute to the NAD(+) site; that span reads GA. Residues Gln-86, Arg-92, and 124-127 each bind substrate; that span reads NPVD. Residues 122 to 124 and Ser-147 each bind NAD(+); that span reads VTN. 152-155 provides a ligand contact to substrate; sequence DTAR. Beta-D-fructose 1,6-bisphosphate-binding residues include Arg-157 and His-172. Catalysis depends on His-179, which acts as the Proton acceptor. Position 225 is a phosphotyrosine (Tyr-225). Thr-234 provides a ligand contact to substrate.

The protein belongs to the LDH/MDH superfamily. LDH family. In terms of assembly, homotetramer.

It localises to the cytoplasm. It catalyses the reaction (S)-lactate + NAD(+) = pyruvate + NADH + H(+). The protein operates within fermentation; pyruvate fermentation to lactate; (S)-lactate from pyruvate: step 1/1. Allosterically activated by fructose 1,6-bisphosphate (FBP). Functionally, catalyzes the conversion of lactate to pyruvate. The protein is L-lactate dehydrogenase of Acetivibrio thermocellus (strain ATCC 27405 / DSM 1237 / JCM 9322 / NBRC 103400 / NCIMB 10682 / NRRL B-4536 / VPI 7372) (Clostridium thermocellum).